Consider the following 37-residue polypeptide: Large ribosomal subunit protein bL36 (37 aa).

The protein belongs to the bacterial ribosomal protein bL36 family.

This chain is Large ribosomal subunit protein bL36, found in Deinococcus geothermalis (strain DSM 11300 / CIP 105573 / AG-3a).